The chain runs to 346 residues: Small ribosomal subunit biogenesis GTPase RsgA (346 aa).

Positions 98 to 261 (VQGGRGPQLA…VIDTPGMRTL (164 aa)) constitute a CP-type G domain. GTP contacts are provided by residues 148 to 151 (TKAD) and 200 to 208 (GSSGVGKST). Cysteine 284, cysteine 289, histidine 291, and cysteine 297 together coordinate Zn(2+). Positions 317–346 (RKLSDENQHNTPVQSGPRGAKSPAGRGKRR) are disordered.

This sequence belongs to the TRAFAC class YlqF/YawG GTPase family. RsgA subfamily. Monomer. Associates with 30S ribosomal subunit, binds 16S rRNA. The cofactor is Zn(2+).

Its subcellular location is the cytoplasm. Functionally, one of several proteins that assist in the late maturation steps of the functional core of the 30S ribosomal subunit. Helps release RbfA from mature subunits. May play a role in the assembly of ribosomal proteins into the subunit. Circularly permuted GTPase that catalyzes slow GTP hydrolysis, GTPase activity is stimulated by the 30S ribosomal subunit. This is Small ribosomal subunit biogenesis GTPase RsgA from Mesorhizobium japonicum (strain LMG 29417 / CECT 9101 / MAFF 303099) (Mesorhizobium loti (strain MAFF 303099)).